The chain runs to 255 residues: Glutamate racemase (255 aa).

Residues 7–8 and 39–40 contribute to the substrate site; these read DS and YG. Cys70 serves as the catalytic Proton donor/acceptor. Position 71 to 72 (71 to 72) interacts with substrate; that stretch reads NT. Cys181 acts as the Proton donor/acceptor in catalysis. 182 to 183 contributes to the substrate binding site; that stretch reads TH.

This sequence belongs to the aspartate/glutamate racemases family.

The catalysed reaction is L-glutamate = D-glutamate. The protein operates within cell wall biogenesis; peptidoglycan biosynthesis. Its function is as follows. Provides the (R)-glutamate required for cell wall biosynthesis. The sequence is that of Glutamate racemase from Helicobacter pylori (strain ATCC 700392 / 26695) (Campylobacter pylori).